The chain runs to 356 residues: Leucine carboxyl methyltransferase 1 (356 aa).

S-adenosyl-L-methionine contacts are provided by residues Arg-78, Gly-101, Asp-127, 183–184 (DL), and Glu-218.

Belongs to the methyltransferase superfamily. LCMT family.

It catalyses the reaction [phosphatase 2A protein]-C-terminal L-leucine + S-adenosyl-L-methionine = [phosphatase 2A protein]-C-terminal L-leucine methyl ester + S-adenosyl-L-homocysteine. Functionally, methylates the carboxyl group of the C-terminal leucine residue of protein phosphatase 2A catalytic subunits to form alpha-leucine ester residues. The chain is Leucine carboxyl methyltransferase 1 (PPM1) from Cryptococcus neoformans var. neoformans serotype D (strain JEC21 / ATCC MYA-565) (Filobasidiella neoformans).